The primary structure comprises 170 residues: MTIIVGIDPGSRVTGYGIIRQQGRHLTYLGSGCIRTVVDDMPTRLKLIYAGVSEIITQFQPDCMAIEQVFMAKNPDSALKLGQARGVAIVAGVNQDLPVFEYAARLVKKTVVGTGAADKKQVQHMVRSLLKLSASPQADAADALAIAITHCHFNQSLLRTAAVKVNPLAG.

Active-site residues include D8, E67, and D139. Positions 8, 67, and 139 each coordinate Mg(2+).

Belongs to the RuvC family. In terms of assembly, homodimer which binds Holliday junction (HJ) DNA. The HJ becomes 2-fold symmetrical on binding to RuvC with unstacked arms; it has a different conformation from HJ DNA in complex with RuvA. In the full resolvosome a probable DNA-RuvA(4)-RuvB(12)-RuvC(2) complex forms which resolves the HJ. Mg(2+) serves as cofactor.

It is found in the cytoplasm. It carries out the reaction Endonucleolytic cleavage at a junction such as a reciprocal single-stranded crossover between two homologous DNA duplexes (Holliday junction).. Its function is as follows. The RuvA-RuvB-RuvC complex processes Holliday junction (HJ) DNA during genetic recombination and DNA repair. Endonuclease that resolves HJ intermediates. Cleaves cruciform DNA by making single-stranded nicks across the HJ at symmetrical positions within the homologous arms, yielding a 5'-phosphate and a 3'-hydroxyl group; requires a central core of homology in the junction. The consensus cleavage sequence is 5'-(A/T)TT(C/G)-3'. Cleavage occurs on the 3'-side of the TT dinucleotide at the point of strand exchange. HJ branch migration catalyzed by RuvA-RuvB allows RuvC to scan DNA until it finds its consensus sequence, where it cleaves and resolves the cruciform DNA. The sequence is that of Crossover junction endodeoxyribonuclease RuvC from Pectobacterium atrosepticum (strain SCRI 1043 / ATCC BAA-672) (Erwinia carotovora subsp. atroseptica).